We begin with the raw amino-acid sequence, 257 residues long: Phycoerythrobilin:ferredoxin oxidoreductase (257 aa).

The protein belongs to the HY2 family.

The catalysed reaction is (3Z)-phycoerythrobilin + oxidized 2[4Fe-4S]-[ferredoxin] = 15,16-dihydrobiliverdin + reduced 2[4Fe-4S]-[ferredoxin] + 2 H(+). In terms of biological role, catalyzes the two-electron reduction of the C2 and C3(1) diene system of 15,16-dihydrobiliverdin. The protein is Phycoerythrobilin:ferredoxin oxidoreductase of Prochlorococcus marinus (strain MIT 9303).